We begin with the raw amino-acid sequence, 689 residues long: Solute carrier family 22 member 23 (689 aa).

Disordered stretches follow at residues Met-1–Ala-55 and Thr-162–Asn-188. A glycan (N-linked (GlcNAc...) asparagine) is linked at Asn-24. Residues Trp-165–Thr-177 show a composition bias toward polar residues. A run of 2 helical transmembrane segments spans residues Phe-229–Val-249 and Pro-253–Val-273. N-linked (GlcNAc...) asparagine glycosylation is present at Asn-274. 8 helical membrane-spanning segments follow: residues Phe-283 to Leu-303, Phe-310 to Leu-330, Val-339 to Pro-359, Thr-466 to Gly-486, Gly-489 to Leu-509, Ile-541 to Phe-561, Cys-572 to Ile-592, and Phe-601 to Leu-621.

The protein belongs to the major facilitator (TC 2.A.1) superfamily. Organic cation transporter (TC 2.A.1.19) family.

It localises to the membrane. The polypeptide is Solute carrier family 22 member 23 (Slc22a23) (Mus musculus (Mouse)).